Reading from the N-terminus, the 397-residue chain is Protein RecA (397 aa).

The tract at residues 1–23 is disordered; sequence MALETKPAKDPAAEDKHELDPKR. An ATP-binding site is contributed by 83–90; that stretch reads GPESSGKT.

The protein belongs to the RecA family.

Its subcellular location is the cytoplasm. Its function is as follows. Can catalyze the hydrolysis of ATP in the presence of single-stranded DNA, the ATP-dependent uptake of single-stranded DNA by duplex DNA, and the ATP-dependent hybridization of homologous single-stranded DNAs. It interacts with LexA causing its activation and leading to its autocatalytic cleavage. In Bifidobacterium longum (strain NCC 2705), this protein is Protein RecA.